We begin with the raw amino-acid sequence, 293 residues long: Aquaporin-6 (293 aa).

Topologically, residues 1 to 22 are cytoplasmic; that stretch reads MEPGLCSRAYLLVGGLWTAISK. A helical membrane pass occupies residues 23-43; it reads ALFAEFLATGLYVFFGVGSVL. The Extracellular portion of the chain corresponds to 44-51; that stretch reads PWPVALPS. Residues 52–70 form a helical membrane-spanning segment; that stretch reads VLQIAITFNLATATAVQIS. The Cytoplasmic portion of the chain corresponds to 71–75; sequence WKTSG. The segment at residues 76–85 is an intramembrane region (discontinuously helical); that stretch reads AHANPAVTLA. An NPA 1 motif is present at residues 79 to 81; sequence NPA. Residues 86–96 are Cytoplasmic-facing; it reads YLVGSHISLPR. A helical transmembrane segment spans residues 97-118; sequence AMAYIAAQLAGATAGAALLYGV. Topologically, residues 119–138 are extracellular; sequence TPGGIRETLGVNVVHNSTST. Asn-134 is a glycosylation site (N-linked (GlcNAc...) asparagine). Residues 139 to 159 traverse the membrane as a helical segment; sequence GQAVAVELVLTLQLVLCVFAS. Residues 160-165 are Cytoplasmic-facing; that stretch reads MDGRQT. The helical transmembrane segment at 166-185 threads the bilayer; sequence LASPAAMIGTSVALGHLIGI. Over 186–189 the chain is Extracellular; the sequence is YFTG. Residues 190-202 constitute an intramembrane region (discontinuously helical); it reads CSMNPARSFGPAV. The short motif at 193–195 is the NPA 2 element; it reads NPA. Residues 203 to 210 are Extracellular-facing; it reads IVGKFAVH. The helical transmembrane segment at 211-231 threads the bilayer; it reads WIFWVGPLTGAVLASLIYNFI. Residues 232 to 293 lie on the Cytoplasmic side of the membrane; the sequence is LFPDTKTVAQ…RSFSFTLGLC (62 aa).

This sequence belongs to the MIP/aquaporin (TC 1.A.8) family. Homotetramer; each monomer provides an independent solute pore.

It localises to the cytoplasmic vesicle membrane. The enzyme catalyses nitrate(in) = nitrate(out). It catalyses the reaction iodide(out) = iodide(in). It carries out the reaction bromide(in) = bromide(out). The catalysed reaction is chloride(in) = chloride(out). The enzyme catalyses Na(+)(in) = Na(+)(out). It catalyses the reaction H2O(in) = H2O(out). It carries out the reaction CO2(out) = CO2(in). The catalysed reaction is NH4(+)(in) = NH4(+)(out). Functionally, aquaporins form homotetrameric transmembrane channels, with each monomer independently mediating water transport across the plasma membrane along its osmotic gradient. Unlike classical aquaporins, AQP6 is an intracellular channel with selective anion permeability, particularly for nitrate, and exhibits very low water permeability. It may also facilitate the transport of gases, such as CO2 and NH4(+), as demonstrated in vitro. The polypeptide is Aquaporin-6 (Mus musculus (Mouse)).